Here is a 356-residue protein sequence, read N- to C-terminus: Histidinol-phosphate aminotransferase (356 aa).

An N6-(pyridoxal phosphate)lysine modification is found at Lys210.

The protein belongs to the class-II pyridoxal-phosphate-dependent aminotransferase family. Histidinol-phosphate aminotransferase subfamily. In terms of assembly, homodimer. Pyridoxal 5'-phosphate serves as cofactor.

It carries out the reaction L-histidinol phosphate + 2-oxoglutarate = 3-(imidazol-4-yl)-2-oxopropyl phosphate + L-glutamate. It participates in amino-acid biosynthesis; L-histidine biosynthesis; L-histidine from 5-phospho-alpha-D-ribose 1-diphosphate: step 7/9. The polypeptide is Histidinol-phosphate aminotransferase (Gluconacetobacter diazotrophicus (strain ATCC 49037 / DSM 5601 / CCUG 37298 / CIP 103539 / LMG 7603 / PAl5)).